Reading from the N-terminus, the 473-residue chain is Photosystem II CP43 reaction center protein (473 aa).

A propeptide spanning residues 1–14 (MKTLYSLRRFYHVE) is cleaved from the precursor. Thr15 carries the post-translational modification N-acetylthreonine. At Thr15 the chain carries Phosphothreonine. 5 helical membrane-spanning segments follow: residues 69-93 (LFEVAHFVPEKPMYEQGLILLPHLA), 134-155 (LLGPETLEESFPFFGYVWKDRN), 178-200 (KALYFGGIYDTWAPGGGDVRKIT), 255-275 (KPFAWARRALVWSGEAYLSYS), and 291-312 (WFNNTAYPSEFYGPTGPEASQA). Glu367 contacts [CaMn4O5] cluster. The chain crosses the membrane as a helical span at residues 447–471 (RARAAAAGFEKGIDRDFEPVLSMTP).

Belongs to the PsbB/PsbC family. PsbC subfamily. As to quaternary structure, PSII is composed of 1 copy each of membrane proteins PsbA, PsbB, PsbC, PsbD, PsbE, PsbF, PsbH, PsbI, PsbJ, PsbK, PsbL, PsbM, PsbT, PsbX, PsbY, PsbZ, Psb30/Ycf12, at least 3 peripheral proteins of the oxygen-evolving complex and a large number of cofactors. It forms dimeric complexes. Requires Binds multiple chlorophylls and provides some of the ligands for the Ca-4Mn-5O cluster of the oxygen-evolving complex. It may also provide a ligand for a Cl- that is required for oxygen evolution. PSII binds additional chlorophylls, carotenoids and specific lipids. as cofactor.

Its subcellular location is the plastid. The protein localises to the chloroplast thylakoid membrane. Functionally, one of the components of the core complex of photosystem II (PSII). It binds chlorophyll and helps catalyze the primary light-induced photochemical processes of PSII. PSII is a light-driven water:plastoquinone oxidoreductase, using light energy to abstract electrons from H(2)O, generating O(2) and a proton gradient subsequently used for ATP formation. This Phaseolus vulgaris (Kidney bean) protein is Photosystem II CP43 reaction center protein.